Here is a 587-residue protein sequence, read N- to C-terminus: MEGADACRSNGASPEARDTRSPPGPSGSLENGTKADSKDTKTTNGHSGEVTEGKTLGSALKSGEGKSGLFSSNEWRRPIIQFVESVDDKGSSYFSMDSAEGRRSPYAGLQLGASKKPPVTFAEKGELRKSIFSEPRKPTVTIVEPGEVRRNSYPRADSSLLARAKSGSEEVLCDSCIGNKQKAVKSCLVCQASFCELHLKPHLEGAAFRDHQLLEPIRDFEARKCPLHGKTMELFCQTDQTCICYLCMFQEHKNHSTVTVEEAKAEKETELSLQKEQLQLKIIEIEDDVEKWQKEKDRIKSFTTNEKAILEQNFRDLVRELEKQKEEVRAALEQREQDAVDQVKVIVDALDERAKVLHEDKQTREQLHNISDSVLFLQEFGALMSNYSLPPPLPTYHVLLEGEGLGQSLGNCKDDLLNVCMRHVEKMCKADLSRNFIERNHMENGGDHRYMNSYTSSYGNEWSTPDTMKRYSMYLTPKGGGRTSYQPSSPSRLSKETNQKNFNNLYGTKGNYTSRVWEYTSTVQNSEDMPTVQGNSSFSLKGFPSLLRSQVPKAQPQTWKSGKQTLLSHYRPFYVNKGSGIGSNEAP.

Residues 1–71 (MEGADACRSN…SGEGKSGLFS (71 aa)) are disordered. Phosphoserine occurs at positions 21, 28, 58, and 104. Y106 carries the post-translational modification Phosphotyrosine. The B box-type zinc-finger motif lies at 220 to 260 (FEARKCPLHGKTMELFCQTDQTCICYLCMFQEHKNHSTVTV). Zn(2+)-binding residues include C225, H228, C247, and H252. Residues 259–348 (TVEEAKAEKE…AVDQVKVIVD (90 aa)) are a coiled coil. Phosphothreonine is present on T476. S489 carries the post-translational modification Phosphoserine.

As to quaternary structure, interacts with VIM and HINT1. Interacts with IKBKG/NEMO. Interacts with STING1.

It localises to the cytoplasm. It is found in the lysosome. Functionally, plays a crucial role in the regulation of macrophage activation in response to viral or bacterial infections within the respiratory tract. Mechanistically, TRIM29 interacts with IKBKG/NEMO in the lysosome where it induces its 'Lys-48' ubiquitination and subsequent degradation. In turn, the expression of type I interferons and the production of pro-inflammatory cytokines are inhibited. Additionally, induces the 'Lys-48' ubiquitination of STING1 in a similar way, leading to its degradation. The polypeptide is Tripartite motif-containing protein 29 (Trim29) (Mus musculus (Mouse)).